A 208-amino-acid chain; its full sequence is Putative dioxygenase RC0543 (208 aa).

It belongs to the intradiol ring-cleavage dioxygenase family.

This Rickettsia conorii (strain ATCC VR-613 / Malish 7) protein is Putative dioxygenase RC0543.